A 367-amino-acid chain; its full sequence is Chorismate synthase (367 aa).

R48 contacts NADP(+). Residues 125–127 (RSS), 243–244 (NA), G283, 298–302 (KPTSS), and R324 each bind FMN.

It belongs to the chorismate synthase family. As to quaternary structure, homotetramer. Requires FMNH2 as cofactor.

The catalysed reaction is 5-O-(1-carboxyvinyl)-3-phosphoshikimate = chorismate + phosphate. It participates in metabolic intermediate biosynthesis; chorismate biosynthesis; chorismate from D-erythrose 4-phosphate and phosphoenolpyruvate: step 7/7. Its function is as follows. Catalyzes the anti-1,4-elimination of the C-3 phosphate and the C-6 proR hydrogen from 5-enolpyruvylshikimate-3-phosphate (EPSP) to yield chorismate, which is the branch point compound that serves as the starting substrate for the three terminal pathways of aromatic amino acid biosynthesis. This reaction introduces a second double bond into the aromatic ring system. This Psychrobacter cryohalolentis (strain ATCC BAA-1226 / DSM 17306 / VKM B-2378 / K5) protein is Chorismate synthase.